A 308-amino-acid chain; its full sequence is D-alanine--D-alanine ligase B (308 aa).

An ATP-grasp domain is found at K102 to E302. Residue P128–T183 participates in ATP binding. Mg(2+)-binding residues include D252, E269, and N271.

It belongs to the D-alanine--D-alanine ligase family. Requires Mg(2+) as cofactor. Mn(2+) is required as a cofactor.

Its subcellular location is the cytoplasm. It catalyses the reaction 2 D-alanine + ATP = D-alanyl-D-alanine + ADP + phosphate + H(+). It participates in cell wall biogenesis; peptidoglycan biosynthesis. Functionally, cell wall formation. This chain is D-alanine--D-alanine ligase B, found in Mesorhizobium japonicum (strain LMG 29417 / CECT 9101 / MAFF 303099) (Mesorhizobium loti (strain MAFF 303099)).